Reading from the N-terminus, the 426-residue chain is Serine--tRNA ligase (426 aa).

Residue Thr-231–Glu-233 participates in L-serine binding. Arg-262–Glu-264 is a binding site for ATP. Glu-285 is a binding site for L-serine. Glu-349–Ser-352 contacts ATP. Ser-385 contributes to the L-serine binding site.

The protein belongs to the class-II aminoacyl-tRNA synthetase family. Type-1 seryl-tRNA synthetase subfamily. In terms of assembly, homodimer. The tRNA molecule binds across the dimer.

The protein localises to the cytoplasm. The enzyme catalyses tRNA(Ser) + L-serine + ATP = L-seryl-tRNA(Ser) + AMP + diphosphate + H(+). The catalysed reaction is tRNA(Sec) + L-serine + ATP = L-seryl-tRNA(Sec) + AMP + diphosphate + H(+). Its pathway is aminoacyl-tRNA biosynthesis; selenocysteinyl-tRNA(Sec) biosynthesis; L-seryl-tRNA(Sec) from L-serine and tRNA(Sec): step 1/1. Catalyzes the attachment of serine to tRNA(Ser). Is also able to aminoacylate tRNA(Sec) with serine, to form the misacylated tRNA L-seryl-tRNA(Sec), which will be further converted into selenocysteinyl-tRNA(Sec). The chain is Serine--tRNA ligase from Legionella pneumophila (strain Paris).